Reading from the N-terminus, the 107-residue chain is Nucleoid-associated protein A1E_05550 (107 aa).

This sequence belongs to the YbaB/EbfC family. In terms of assembly, homodimer.

The protein localises to the cytoplasm. Its subcellular location is the nucleoid. Its function is as follows. Binds to DNA and alters its conformation. May be involved in regulation of gene expression, nucleoid organization and DNA protection. The chain is Nucleoid-associated protein A1E_05550 from Rickettsia canadensis (strain McKiel).